Consider the following 216-residue polypeptide: MSSTLVLETTAYTLEQLIHLDAPQIALAGRSNVGKSSLVNALARRKQLAKTSSTPGKTRSVNYYRVEPEGFYIVDLPGYGYAQCSKEERKKWAKLIEKYIVSCKSLRGLAVLLDCRLDPQRLDVDLTSYARANNIPLLPVLTKGDKCKLRERSDRQKQWAVLLGGRKPLVTASMTGLGIADLWRELRALAAGGLSADDEAEDAPSDTIDAIDDVTA.

Residues 21 to 192 form the EngB-type G domain; that stretch reads DAPQIALAGR…WRELRALAAG (172 aa). GTP-binding positions include 29-36, 56-60, 75-78, 142-145, and 170-173; these read GRSNVGKS, GKTRS, DLPG, TKGD, and VTAS. The Mg(2+) site is built by Ser-36 and Thr-58. Residues 195–216 form a disordered region; sequence SADDEAEDAPSDTIDAIDDVTA. Residues 196 to 216 show a composition bias toward acidic residues; the sequence is ADDEAEDAPSDTIDAIDDVTA.

Belongs to the TRAFAC class TrmE-Era-EngA-EngB-Septin-like GTPase superfamily. EngB GTPase family. Mg(2+) is required as a cofactor.

Its function is as follows. Necessary for normal cell division and for the maintenance of normal septation. The chain is Probable GTP-binding protein EngB from Nitratidesulfovibrio vulgaris (strain DP4) (Desulfovibrio vulgaris).